The following is a 178-amino-acid chain: MINRKILLTSLLLIFTVLSACSREKNTCRVVKISDGDTLTCLTKGNKSIKVRLAEIDAPEKSQAFGQKSKKTLSDLVYQKNVRLARKGKDRYQRTLAVVYYQKQNINLEMVKQGMAWAYKQYSHDPIYLQAQENAQAKGIGLWADNNPIEPSQWRRQEKINMAFDYQTFPSSISLFPT.

The N-terminal stretch at 1-19 (MINRKILLTSLLLIFTVLS) is a signal peptide. Residues Arg-52, Glu-60, and Arg-94 contribute to the active site.

This sequence belongs to the thermonuclease family.

This is an uncharacterized protein from Haemophilus influenzae (strain ATCC 51907 / DSM 11121 / KW20 / Rd).